Consider the following 452-residue polypeptide: Low-affinity putrescine importer PlaP (452 aa).

Residues 1–16 (MSHNVTPNTSRVELRK) are Cytoplasmic-facing. A helical membrane pass occupies residues 17–37 (TLTLVPVVMMGLAYMQPMTLF). At 38–48 (DTFGIVSGLTD) the chain is on the periplasmic side. A helical transmembrane segment spans residues 49–69 (GHVPTAYAFALIAILFTALSY). Over 70–95 (GKLVRRYPSAGSAYTYAQKSISPTVG) the chain is Cytoplasmic. A helical membrane pass occupies residues 96 to 116 (FMVGWSSLLDYLFAPMINILL). The Periplasmic segment spans residues 117–123 (AKIYFEA). Residues 124-144 (LVPSIPSWMFVVALVAFMTAF) form a helical membrane-spanning segment. Over 145 to 158 (NLRSLKSVANFNTV) the chain is Cytoplasmic. The chain crosses the membrane as a helical span at residues 159–179 (IVVLQVVLIAVILGMVVYGVF). The Periplasmic segment spans residues 180 to 199 (EGEGAGTLASTRPFWSGDAH). The chain crosses the membrane as a helical span at residues 200 to 220 (VIPMITGATILCFSFTGFDGI). Residues 221-237 (SNLSEETKDAERVIPRA) are Cytoplasmic-facing. The chain crosses the membrane as a helical span at residues 238–258 (IFLTALIGGMIFIFATYFLQL). At 259–283 (YFPDISRFKDPDASQPEIMLYVAGK) the chain is on the periplasmic side. Residues 284 to 304 (AFQVGALIFSTITVLASGMAA) form a helical membrane-spanning segment. Over 305-339 (HAGVARLMYVMGRDGVFPKSFFGYVHPKWRTPAMN) the chain is Cytoplasmic. 2 consecutive transmembrane segments (helical) span residues 340-360 (IILV…MATA) and 361-381 (LINF…ISQF). Residues 382 to 394 (WIREKRNKTLKDH) are Cytoplasmic-facing. A helical membrane pass occupies residues 395 to 415 (FQYLFLPMCGALTVGALWVNL). The Periplasmic segment spans residues 416–417 (EE). Residues 418–438 (SSMVLGLIWAAIGLIYLACVT) form a helical membrane-spanning segment. The Cytoplasmic portion of the chain corresponds to 439–452 (KSFRNPVPQYEDVA).

It belongs to the amino acid-polyamine-organocation (APC) superfamily.

Its subcellular location is the cell inner membrane. The catalysed reaction is putrescine(in) + H(+)(in) = putrescine(out) + H(+)(out). Putrescine importer. This chain is Low-affinity putrescine importer PlaP (plaP), found in Escherichia coli O157:H7.